A 408-amino-acid chain; its full sequence is Putative mannan endo-1,4-beta-mannosidase P (408 aa).

The N-terminal stretch at 1 to 23 (MKCLCFIVLLAIVIAQSYVGVEA) is a signal peptide. Asn73 is a glycosylation site (N-linked (GlcNAc...) asparagine). Substrate is bound by residues Trp85 and Asn201. Glu202 (proton donor) is an active-site residue. Glu322 functions as the Nucleophile in the catalytic mechanism. Residue Trp364 participates in substrate binding.

It belongs to the glycosyl hydrolase 5 (cellulase A) family.

The protein resides in the secreted. It catalyses the reaction Random hydrolysis of (1-&gt;4)-beta-D-mannosidic linkages in mannans, galactomannans and glucomannans.. This chain is Putative mannan endo-1,4-beta-mannosidase P (MANP), found in Arabidopsis thaliana (Mouse-ear cress).